The primary structure comprises 511 residues: Xylose import ATP-binding protein XylG (511 aa).

2 consecutive ABC transporter domains span residues 6-244 and 261-506; these read LEMR…VGRE and FEAR…IGKP. 38–45 contacts ATP; that stretch reads GENGAGKS.

The protein belongs to the ABC transporter superfamily. Xylose importer (TC 3.A.1.2.4) family. The complex is composed of two ATP-binding proteins (XylG), two transmembrane proteins (XylH) and a solute-binding protein (XylF).

Its subcellular location is the cell inner membrane. The enzyme catalyses D-xylose(out) + ATP + H2O = D-xylose(in) + ADP + phosphate + H(+). Its function is as follows. Part of the ABC transporter complex XylFGH involved in xylose import. Responsible for energy coupling to the transport system. In Brucella suis biovar 1 (strain 1330), this protein is Xylose import ATP-binding protein XylG.